Reading from the N-terminus, the 1779-residue chain is Fibronectin type III domain-containing protein 1 (1779 aa).

The first 29 residues, 1–29 (MAPEARASPRLLLRAALLLLAALLPVASS), serve as a signal peptide directing secretion. Fibronectin type-III domains lie at 33–126 (PVDH…KAPR), 103–203 (PNKP…AEED), 207–302 (VPED…TPES), and 307–402 (APEN…IPTT). The segment covering 400-413 (PTTSSTEASVQPNG) has biased composition (polar residues). Disordered regions lie at residues 400–442 (PTTS…MPPA), 459–1108 (NGVA…RNLD), 1120–1227 (EENT…KPNG), and 1330–1401 (PTTT…PPGT). Residues 423–437 (QQPSSSAPKVAASSQ) are compositionally biased toward low complexity. Polar residues predominate over residues 493–506 (NPRSSRLETLNQKQ). Residues 534-554 (SRKEGMDRRGPSLDPHPHPRV) show a composition bias toward basic and acidic residues. Composition is skewed to polar residues over residues 557–570 (SASS…STDN) and 590–607 (SSGS…TSAP). Over residues 629–640 (ASSSTSRQSHSS) the composition is skewed to low complexity. At S651 the chain carries Phosphoserine. Low complexity predominate over residues 676–694 (HASSSHTTSRTASSSHPSA). A Phosphoserine modification is found at S699. Residues 707–720 (DSDRAAEDTIRRAE) show a composition bias toward basic and acidic residues. Polar residues-rich tracts occupy residues 763–784 (PSVS…SLPA) and 861–875 (PLSS…STTD). Over residues 879–904 (PQTSPASTSRQPSPARPPASRSQPSP) the composition is skewed to low complexity. 2 stretches are compositionally biased toward polar residues: residues 957–971 (APQN…TYED) and 1003–1020 (VGSQ…SQAG). Residues 1085-1097 (LSTSVKKWPSSSS) are compositionally biased toward low complexity. A compositionally biased stretch (basic and acidic residues) spans 1098 to 1108 (PRDKYADRNLD). Composition is skewed to polar residues over residues 1147–1159 (NPAT…NTHS) and 1166–1177 (RAPSSYSSTTPM). The span at 1330–1389 (PTTTMPPSTTTTTVPPTTTLPPTTTTTRRTTTTRRTTTTRRPTTTTRATRRTTTTTTTPE) shows a compositional bias: low complexity. A Fibronectin type-III 5 domain is found at 1543 to 1637 (APRNITVVAM…PSVSFVTESD (95 aa)). N1546 carries an N-linked (GlcNAc...) asparagine glycan.

It localises to the secreted. May be an activator of G protein signaling. This chain is Fibronectin type III domain-containing protein 1 (Fndc1), found in Rattus norvegicus (Rat).